The chain runs to 355 residues: Uroporphyrinogen decarboxylase (355 aa).

Substrate contacts are provided by residues 27-31, D77, Y154, T209, and H327; that span reads RQAGR.

It belongs to the uroporphyrinogen decarboxylase family. Homodimer.

It localises to the cytoplasm. The catalysed reaction is uroporphyrinogen III + 4 H(+) = coproporphyrinogen III + 4 CO2. It participates in porphyrin-containing compound metabolism; protoporphyrin-IX biosynthesis; coproporphyrinogen-III from 5-aminolevulinate: step 4/4. Its function is as follows. Catalyzes the decarboxylation of four acetate groups of uroporphyrinogen-III to yield coproporphyrinogen-III. The sequence is that of Uroporphyrinogen decarboxylase from Tolumonas auensis (strain DSM 9187 / NBRC 110442 / TA 4).